Reading from the N-terminus, the 100-residue chain is ATP synthase subunit c (100 aa).

2 helical membrane passes run 27-47 (SVIAAGIGLGLAALGGAIGMG) and 72-92 (FIALAMIEAQVIYALVITLIV).

This sequence belongs to the ATPase C chain family. In terms of assembly, F-type ATPases have 2 components, F(1) - the catalytic core - and F(0) - the membrane proton channel. F(1) has five subunits: alpha(3), beta(3), gamma(1), delta(1), epsilon(1). F(0) has three main subunits: a(1), b(2) and c(10-14). The alpha and beta chains form an alternating ring which encloses part of the gamma chain. F(1) is attached to F(0) by a central stalk formed by the gamma and epsilon chains, while a peripheral stalk is formed by the delta and b chains.

Its subcellular location is the cell inner membrane. Its function is as follows. F(1)F(0) ATP synthase produces ATP from ADP in the presence of a proton or sodium gradient. F-type ATPases consist of two structural domains, F(1) containing the extramembraneous catalytic core and F(0) containing the membrane proton channel, linked together by a central stalk and a peripheral stalk. During catalysis, ATP synthesis in the catalytic domain of F(1) is coupled via a rotary mechanism of the central stalk subunits to proton translocation. In Campylobacter curvus (strain 525.92), this protein is ATP synthase subunit c.